The primary structure comprises 397 residues: LL-diaminopimelate aminotransferase (397 aa).

Substrate-binding residues include Tyr-14 and Gly-41. Residues Tyr-71, 104–105, Tyr-128, Asn-174, Tyr-205, and 233–235 each bind pyridoxal 5'-phosphate; these read AK and SFS. Positions 105, 128, and 174 each coordinate substrate. At Lys-236 the chain carries N6-(pyridoxal phosphate)lysine. Pyridoxal 5'-phosphate contacts are provided by Arg-244 and Asn-275. Substrate is bound by residues Asn-275 and Arg-368.

This sequence belongs to the class-I pyridoxal-phosphate-dependent aminotransferase family. LL-diaminopimelate aminotransferase subfamily. Homodimer. It depends on pyridoxal 5'-phosphate as a cofactor.

The enzyme catalyses (2S,6S)-2,6-diaminopimelate + 2-oxoglutarate = (S)-2,3,4,5-tetrahydrodipicolinate + L-glutamate + H2O + H(+). Its pathway is amino-acid biosynthesis; L-lysine biosynthesis via DAP pathway; LL-2,6-diaminopimelate from (S)-tetrahydrodipicolinate (aminotransferase route): step 1/1. Functionally, involved in the synthesis of meso-diaminopimelate (m-DAP or DL-DAP), required for both lysine and peptidoglycan biosynthesis. Catalyzes the direct conversion of tetrahydrodipicolinate to LL-diaminopimelate. In Chlamydia pneumoniae (Chlamydophila pneumoniae), this protein is LL-diaminopimelate aminotransferase.